A 364-amino-acid chain; its full sequence is Putative galactoside 2-alpha-L-fucosyltransferase svh-11 (364 aa).

Residues M1–C19 are Cytoplasmic-facing. Residues L20–F42 form a helical; Signal-anchor for type II membrane protein membrane-spanning segment. Residues K43–S364 lie on the Lumenal side of the membrane. 2 N-linked (GlcNAc...) asparagine glycosylation sites follow: N60 and N128.

This sequence belongs to the glycosyltransferase 11 family.

The protein localises to the golgi apparatus. It localises to the golgi stack membrane. In terms of biological role, mediates the transfer of fucose to the terminal galactose on glycan chains of cell surface glycoproteins and glycolipids. Required for axon regeneration after injury. The protein is Putative galactoside 2-alpha-L-fucosyltransferase svh-11 of Caenorhabditis elegans.